A 531-amino-acid polypeptide reads, in one-letter code: Squalene epoxidase 1 (531 aa).

Residues 9-29 (ILPLLISSLLISFVAFYGFFV) traverse the membrane as a helical segment. FAD-binding positions include 70–71 (VA), 90–91 (ER), Arg98, Arg169, Val185, Asp347, and Met360. 2 helical membrane passes run 458–478 (LVCH…IPFP) and 483–503 (IWLG…IIKA).

It belongs to the squalene monooxygenase family. Requires FAD as cofactor. In terms of tissue distribution, expressed in seedlings, leaves, stems, inflorescences, sepals, style and siliques. Expressed in expanded cotyledons, root tips and cortical cells of the root elongation zone, but not in root hair cells. In leaves, expressed in most cells, with a very strong expression in stomata.

It localises to the membrane. The enzyme catalyses squalene + reduced [NADPH--hemoprotein reductase] + O2 = (S)-2,3-epoxysqualene + oxidized [NADPH--hemoprotein reductase] + H2O + H(+). It participates in terpene metabolism; lanosterol biosynthesis; lanosterol from farnesyl diphosphate: step 2/3. Its function is as follows. Catalyzes the stereospecific oxidation of squalene to (S)-2,3-epoxysqualene, and is considered to be a rate-limiting enzyme in steroid biosynthesis. Can produce not only oxidosqualene, but also 2,3:22,23-dioxidosqualene. Main squalene epoxidase in the root. Sqe1 mutants may show defects in membrane lipid rafts, impairing the correct localization of RHD2 NADPH oxidase and the proper polarized production of ROS. The chain is Squalene epoxidase 1 (SQE1) from Arabidopsis thaliana (Mouse-ear cress).